The chain runs to 246 residues: Probable phosphatase Tola_0828 (246 aa).

Zn(2+) is bound by residues His8, His10, His16, His41, Glu74, His102, His132, Asp193, and His195.

The protein belongs to the PHP family. Zn(2+) serves as cofactor.

In Tolumonas auensis (strain DSM 9187 / NBRC 110442 / TA 4), this protein is Probable phosphatase Tola_0828.